Consider the following 86-residue polypeptide: MASKALLLFVMLTFLLVIEMEGRILRVNSKTKDGESNDLLKRLGYNVSELKRIGRELSVQNEVDRFSPGGPDPQHHSYPLSSKPRI.

The N-terminal stretch at M1–G22 is a signal peptide. The N-linked (GlcNAc...) asparagine glycan is linked to N46. The segment at V63–I86 is disordered. A hydroxyproline mark is found at P68 and P71. P71 is a glycosylation site (O-linked (Ara...) hydroxyproline).

This sequence belongs to the CLV3/ESR signal peptide family. The O-glycosylation (arabinosylation) of the hydroxyproline Pro-71 enhances binding affinity of the CLE7p peptide for its receptor. Expressed in roots and seedlings.

It localises to the secreted. Its subcellular location is the extracellular space. In terms of biological role, extracellular signal peptide that regulates cell fate. This Arabidopsis thaliana (Mouse-ear cress) protein is CLAVATA3/ESR (CLE)-related protein 7.